The chain runs to 123 residues: MNAKMALAVAAGGALGALFRFYLSGLLPVYRDFPVGTLMVNGLASFILGYLYGLLFWGFDVPSDWRAFLGTGFCGGLSTFSTFSYETFSLLREREYIMAGLNVAANVFVTISLVFIGFLLARR.

Transmembrane regions (helical) follow at residues 7-27 (LAVA…SGLL), 39-59 (MVNG…FWGF), 68-88 (FLGT…YETF), and 101-121 (LNVA…FLLA). Na(+) contacts are provided by Gly75 and Ser78.

Belongs to the fluoride channel Fluc/FEX (TC 1.A.43) family.

The protein resides in the cell membrane. It carries out the reaction fluoride(in) = fluoride(out). Na(+) is not transported, but it plays an essential structural role and its presence is essential for fluoride channel function. Its function is as follows. Fluoride-specific ion channel. Important for reducing fluoride concentration in the cell, thus reducing its toxicity. This chain is Fluoride-specific ion channel FluC, found in Thermococcus gammatolerans (strain DSM 15229 / JCM 11827 / EJ3).